The following is a 468-amino-acid chain: H(+)/Cl(-) exchange transporter ClcA (468 aa).

Residues 1–32 (MIKRERIVKSVLAHVPKDAINQFVSRGSTPTS) lie on the Cytoplasmic side of the membrane. A helical transmembrane segment spans residues 33 to 69 (FSVLFMAAIVGTLAGLVGTYFEIAVHFVSETRTEWLK). Residues 70–76 (SEIGSVL) lie on the Periplasmic side of the membrane. A helical membrane pass occupies residues 77–100 (PLWLAAILISGALAFIGYYLVNRF). A Selectivity filter part_1 motif is present at residues 106–110 (GSGIP). Serine 107 lines the chloride pocket. Residues 109-116 (IPEIEGAM) constitute an intramembrane region (helical). Residues 117 to 123 (DNIRSVR) are Cytoplasmic-facing. 2 helical membrane-spanning segments follow: residues 124–141 (WWRVIPVKFFGGMGALGS) and 148–166 (EGPTVQMGGAVGRMVTDIF). A Selectivity filter part_2 motif is present at residues 146–150 (GREGP). Over 167–176 (RVKDDDTRHS) the chain is Cytoplasmic. 2 intramembrane regions (helical) span residues 177-189 (LLASGAAGGLAAA) and 193-201 (PLAAIMFVV). Residues 202–214 (EEMRPQFRYSLIS) are Cytoplasmic-facing. Residues 215-232 (IRAVIISAIMANIVFRAI) form a helical membrane-spanning segment. At 233–252 (NGQEAVITMPQYQSPELQSL) the chain is on the periplasmic side. Residues 253–281 (WLFLLLGSLFGVFGVVFNKLITIAQDSFV) form a helical membrane-spanning segment. Residues 282-287 (ALHKND) lie on the Cytoplasmic side of the membrane. A helical transmembrane segment spans residues 288-309 (RKRYLITGTILGGVFGLLLLYV). The Periplasmic portion of the chain corresponds to 310–329 (PQLTGGGIGLIPDITNGNYS). 2 helical membrane-spanning segments follow: residues 330–349 (ISILVMLFVGRVITTLLCFG) and 355–376 (GIFAPMLALGTLFGYAFGASAD). Residues 355-359 (GIFAP) carry the Selectivity filter part_3 motif. Chloride contacts are provided by isoleucine 356 and phenylalanine 357. The Periplasmic portion of the chain corresponds to 377 to 386 (MLLPSLTIEP). Positions 387–401 (GVFAIAGMGALFAAT) form an intramembrane region, helical. The note=Loop between two helices intramembrane region spans 402-404 (VRA). Positions 405–416 (PITGILLVIEMT) form an intramembrane region, helical. The note=Loop between two helices intramembrane region spans 417–421 (NNYYL). Residues 422-438 (ILPLIITSLGAVIVAQL) form a helical membrane-spanning segment. At 439 to 468 (LGGQPIYSQLLHRTLKNDKLRQQDLPENQA) the chain is on the cytoplasmic side. Tyrosine 445 lines the chloride pocket.

This sequence belongs to the chloride channel (TC 2.A.49) family. ClcA subfamily. Homodimer.

The protein resides in the cell inner membrane. The catalysed reaction is 2 chloride(in) + H(+)(out) = 2 chloride(out) + H(+)(in). Its function is as follows. Proton-coupled chloride transporter. Functions as antiport system and exchanges two chloride ions for 1 proton. Probably acts as an electrical shunt for an outwardly-directed proton pump that is linked to amino acid decarboxylation, as part of the extreme acid resistance (XAR) response. The sequence is that of H(+)/Cl(-) exchange transporter ClcA from Vibrio campbellii (strain ATCC BAA-1116).